The chain runs to 297 residues: MAEAANVRQNLQNVPSIFEISASETLDNLIYPALSKIFDYFGLRLDFKLWGSLRIQEELSPLLTWLLQYLYLRKRASSFGESFYGLQRTVTTTGDLLNRRQQFASATLLTFMPYVERKLRTRITRHEDTSPWEQRLLSAFHAFHAAKAAHTFFYLVKYASNHSPIFRLLGLTLRYPSEPPKEDQWTYVVLKMLEVLAFFLQFVQWWYSNDQRRKVGGTLINPEAMPRKQLPKEVQQSLPQRGECPVCLLSIQTPTACSVSGYVFCWKCIVSHMKEHGTCPVTHYPISLDDLVRIYET.

At 1–16 (MAEAANVRQNLQNVPS) the chain is on the peroxisomal matrix side. A helical membrane pass occupies residues 17–44 (IFEISASETLDNLIYPALSKIFDYFGLR). Residues 45–48 (LDFK) lie on the Cytoplasmic side of the membrane. Residues 49–73 (LWGSLRIQEELSPLLTWLLQYLYLR) form a helical membrane-spanning segment. Residues 74–98 (KRASSFGESFYGLQRTVTTTGDLLN) are Peroxisomal matrix-facing. The helical transmembrane segment at 99-119 (RRQQFASATLLTFMPYVERKL) threads the bilayer. At 120 to 124 (RTRIT) the chain is on the cytoplasmic side. Residues 125-158 (RHEDTSPWEQRLLSAFHAFHAAKAAHTFFYLVKY) form a helical membrane-spanning segment. Residues 159-191 (ASNHSPIFRLLGLTLRYPSEPPKEDQWTYVVLK) are Peroxisomal matrix-facing. A helical membrane pass occupies residues 192-219 (MLEVLAFFLQFVQWWYSNDQRRKVGGTL). Over 220–297 (INPEAMPRKQ…LDDLVRIYET (78 aa)) the chain is Cytoplasmic. 4 residues coordinate Zn(2+): Cys-244, Cys-247, Cys-265, and Cys-268. The RING-type; degenerate zinc-finger motif lies at 244–283 (CPVCLLSIQTPTACSVSGYVFCWKCIVSHMKEHGTCPVTH).

This sequence belongs to the pex2/pex10/pex12 family. Component of the PEX2-PEX10-PEX12 retrotranslocation channel.

The protein localises to the peroxisome membrane. Its pathway is protein modification; protein ubiquitination. Component of a retrotranslocation channel required for peroxisome organization by mediating export of the PEX5 receptor from peroxisomes to the cytosol, thereby promoting PEX5 recycling. The retrotranslocation channel is composed of PEX2, PEX10 and PEX12; each subunit contributing transmembrane segments that coassemble into an open channel that specifically allows the passage of PEX5 through the peroxisomal membrane. PEX12 also regulates PEX5 recycling by activating the E3 ubiquitin-protein ligase activity of PEX10. When PEX5 recycling is compromised, PEX12 stimulates PEX10-mediated polyubiquitination of PEX5, leading to its subsequent degradation. This is Peroxisome assembly protein 12 (Pex12) from Drosophila melanogaster (Fruit fly).